We begin with the raw amino-acid sequence, 817 residues long: B lymphocyte-induced maturation protein 1 homolog (817 aa).

A disordered region spans residues 1–62; that stretch reads MGQGSGDDGV…PAGVSASGAR (62 aa). Over residues 15–61 the composition is skewed to low complexity; the sequence is FSSAAAAAHSPPHSPLSVGVSSASSATSSSSTPPSSTSPAGVSASGA. Residues 103 to 241 enclose the SET domain; sequence MNLILKSSSK…ANTELSFWFS (139 aa). 4 consecutive C2H2-type zinc fingers follow at residues 508–530, 536–558, 564–586, and 592–614; these read YACK…VRTH, FKCE…HLVH, HRCD…LRLH, and YTCD…KRLH. A C2H2-type 5; degenerate zinc finger spans residues 620–642; the sequence is YSCGTCGKKYISPSGLRTHWKTT. A disordered region spans residues 709-817; it reads LLGQGPSGMQ…LPSLGLPHYP (109 aa). A compositionally biased stretch (low complexity) spans 779 to 794; it reads QGGPSSGSGQQQHPQH.

Interacts with dre-1; the interaction targets blmp-1 for proteasomal degradation. Interacts with ldb-1 and ham-3. Ubiquitinated by the SCF(dre-1) complex, leading to its degradation by the proteasome. As to expression, expressed in hypodermal, vulval, intestinal and distal tip cells.

Its subcellular location is the nucleus. It localises to the cytoplasm. Its function is as follows. Transcription factor which binds to enhancer elements in the promoter region of genes. Regulates the expression of the transcription factor bed-3 to control vulval development. Promotes terminal differentiation in the hypodermis and is involved in regulation of gonadal outgrowth and entry into the dauer stage. Regulates the timing of dorsalward migration of the distal tip cells of the hermaphrodite gonad by inhibiting precocious unc-5 and lin-29 expression which in turn prevents early dorsalward turning. Plays a role in male tail tip morphogenesis. The sequence is that of B lymphocyte-induced maturation protein 1 homolog from Caenorhabditis elegans.